A 41-amino-acid polypeptide reads, in one-letter code: uncharacterized protein (41 aa).

Its subcellular location is the plastid. It is found in the chloroplast. This is an uncharacterized protein from Trieres chinensis (Marine centric diatom).